Reading from the N-terminus, the 218-residue chain is Adenylate kinase (218 aa).

10-15 (GAGKGT) serves as a coordination point for ATP. The segment at 30-59 (STGDMFRAAMANQTEMGRLAKSFIDKGELV) is NMP. Residues threonine 31, arginine 36, 57-59 (ELV), 86-89 (GYPR), and glutamine 93 contribute to the AMP site. An LID region spans residues 127-165 (GRFICRSCGSTYHKVFNPTKVEGTCDVCGGHEFFQREDD). An ATP-binding site is contributed by arginine 128. Positions 131 and 134 each coordinate Zn(2+). 137–138 (TY) lines the ATP pocket. 2 residues coordinate Zn(2+): cysteine 151 and cysteine 154. The AMP site is built by arginine 162 and arginine 173. Glutamine 201 provides a ligand contact to ATP.

Belongs to the adenylate kinase family. As to quaternary structure, monomer.

Its subcellular location is the cytoplasm. It catalyses the reaction AMP + ATP = 2 ADP. Its pathway is purine metabolism; AMP biosynthesis via salvage pathway; AMP from ADP: step 1/1. Catalyzes the reversible transfer of the terminal phosphate group between ATP and AMP. Plays an important role in cellular energy homeostasis and in adenine nucleotide metabolism. The chain is Adenylate kinase from Streptococcus thermophilus (strain CNRZ 1066).